The primary structure comprises 419 residues: Creatine kinase S-type, mitochondrial (419 aa).

The transit peptide at 1–39 (MASTFSKLLTGRNASLLFATLGTGALTTGYLLNKQNVCA) directs the protein to the mitochondrion. A cardiolipin-binding region spans residues 40–64 (AAREQHKLFPPSADYPDLRKHNNCM). Residues 46–132 (KLFPPSADYP…FDPVIKLRHN (87 aa)) enclose the Phosphagen kinase N-terminal domain. Positions 159–401 (YVLSSRVRTG…NYLVDCEKKL (243 aa)) constitute a Phosphagen kinase C-terminal domain. Residues 162-166 (SSRVR) and His-225 contribute to the ATP site. At Tyr-255 the chain carries Phosphotyrosine. ATP contacts are provided by residues Arg-270, Arg-326, 354 to 359 (RGTGGV), and Asp-369. Phosphothreonine is present on Thr-356.

Belongs to the ATP:guanido phosphotransferase family. Exists as an octamer composed of four CKMT2 homodimers.

The protein localises to the mitochondrion inner membrane. The enzyme catalyses creatine + ATP = N-phosphocreatine + ADP + H(+). Its function is as follows. Reversibly catalyzes the transfer of phosphate between ATP and various phosphogens (e.g. creatine phosphate). Creatine kinase isoenzymes play a central role in energy transduction in tissues with large, fluctuating energy demands, such as skeletal muscle, heart, brain and spermatozoa. This Bos taurus (Bovine) protein is Creatine kinase S-type, mitochondrial (CKMT2).